We begin with the raw amino-acid sequence, 89 residues long: Large ribosomal subunit protein bL28 (89 aa).

This sequence belongs to the bacterial ribosomal protein bL28 family.

This is Large ribosomal subunit protein bL28 from Chlamydia trachomatis serovar L2 (strain ATCC VR-902B / DSM 19102 / 434/Bu).